A 475-amino-acid polypeptide reads, in one-letter code: Tubulin gamma chain (475 aa).

142–148 (AGGTGSG) contacts GTP. Residues 455–475 (GKQVSGEGNTSGTVDSRVGAS) form a disordered region.

This sequence belongs to the tubulin family.

The protein resides in the cytoplasm. The protein localises to the cytoskeleton. It is found in the microtubule organizing center. Tubulin is the major constituent of microtubules. The gamma chain is found at microtubule organizing centers (MTOC) such as the spindle poles, suggesting that it is involved in the minus-end nucleation of microtubule assembly. This Physcomitrium patens (Spreading-leaved earth moss) protein is Tubulin gamma chain (TUBG1).